The sequence spans 169 residues: Ribosome maturation factor RimM (169 aa).

Residues 94 to 167 (ENEFYFHEII…KITIEVMEGL (74 aa)) form the PRC barrel domain.

This sequence belongs to the RimM family. Binds ribosomal protein uS19.

Its subcellular location is the cytoplasm. Its function is as follows. An accessory protein needed during the final step in the assembly of 30S ribosomal subunit, possibly for assembly of the head region. Essential for efficient processing of 16S rRNA. May be needed both before and after RbfA during the maturation of 16S rRNA. It has affinity for free ribosomal 30S subunits but not for 70S ribosomes. This chain is Ribosome maturation factor RimM, found in Listeria monocytogenes serotype 4b (strain F2365).